Consider the following 340-residue polypeptide: DnaJ homolog subfamily B member 1 (340 aa).

Residues glycine 2–glutamate 70 enclose the J domain. Residues glycine 68–phenylalanine 90 form a disordered region. Positions lysine 73 to asparagine 86 are enriched in gly residues. Threonine 307 carries the phosphothreonine modification.

In terms of assembly, interacts with DNAJC3. Interacts with HSF1 (via transactivation domain); this interaction results in the inhibition of heat shock- and HSF1-induced transcriptional activity during the attenuation and recovery phase period of the heat shock response. Interacts with BAG3.

It localises to the cytoplasm. It is found in the nucleus. Its subcellular location is the nucleolus. Its function is as follows. Interacts with HSP70 and can stimulate its ATPase activity. Stimulates the association between HSC70 and HIP. Negatively regulates heat shock-induced HSF1 transcriptional activity during the attenuation and recovery phase period of the heat shock response. Stimulates ATP hydrolysis and the folding of unfolded proteins mediated by HSPA1A/B (in vitro). This chain is DnaJ homolog subfamily B member 1 (DNAJB1), found in Bos taurus (Bovine).